The sequence spans 70 residues: uncharacterized protein (70 aa).

This is an uncharacterized protein from Escherichia coli O157:H7.